The chain runs to 408 residues: Lipoate--protein ligase 1 (408 aa).

The N-terminal 18 residues, 1–18 (MKRIFRLVRRCHYSTEKR), are a transit peptide targeting the mitochondrion. The 183-residue stretch at 60–242 (KFNEPILFLW…EFTKFYEQNY (183 aa)) folds into the BPL/LPL catalytic domain. Arg102, Gly107, and Tyr110 together coordinate ATP. Gly107 is a (R)-lipoate binding site. Asp153 is a Mg(2+) binding site. An ATP-binding site is contributed by Lys160. Lys160 contacts (R)-lipoate.

It belongs to the LplA family.

The protein resides in the mitochondrion. It catalyses the reaction L-lysyl-[lipoyl-carrier protein] + (R)-lipoate + ATP = N(6)-[(R)-lipoyl]-L-lysyl-[lipoyl-carrier protein] + AMP + diphosphate + H(+). The catalysed reaction is (R)-dihydrolipoate + L-lysyl-[lipoyl-carrier protein] + ATP = N(6)-[(R)-dihydrolipoyl]-L-lysyl-[lipoyl-carrier protein] + AMP + diphosphate + H(+). The enzyme catalyses (R)-dihydrolipoate + ATP + H(+) = N(6)-[(R)-dihydrolipoyl]-5'-AMP + diphosphate. It carries out the reaction N(6)-[(R)-dihydrolipoyl]-5'-AMP + L-lysyl-[lipoyl-carrier protein] = N(6)-[(R)-dihydrolipoyl]-L-lysyl-[lipoyl-carrier protein] + AMP + 2 H(+). Its pathway is protein modification; protein lipoylation via exogenous pathway; protein N(6)-(lipoyl)lysine from lipoate: step 1/2. The protein operates within protein modification; protein lipoylation via exogenous pathway; protein N(6)-(lipoyl)lysine from lipoate: step 2/2. With respect to regulation, inhibited by the lipoate analog 8-bromo-octanoate (BrO). Catalytic activity is increased in the presence of Mg(2+). Catalyzes both the ATP-dependent activation of exogenously supplied lipoate to lipoyl-AMP and the transfer of the activated lipoyl onto the lipoyl domains of lipoate-dependent enzymes. In the mitochondrion, functions as a redox switch between two lipoylation routes. Senses the oxidation state of lipoate and determines which downstream enzymes will be lipoylated. In low reducing conditions, uses lipoate in its oxidized ring form to lipoylate glycine cleavage system H-protein GCVH. In high reducing conditions and together with LipL2, uses reduced lipoate (dihydrolipoate) to lipoylate the E2 component of the branched chain alpha-ketoacid dehydrogenase complex BCKDH-E2/BCDH and the E2 component of the alpha-ketoglutarate dehydrogenase complex KDH. LipL1 is responsible for catalysing the activation of lipoate, forming lipoyl-AMP while LipL2 is required but is not capable of catalyzing this reaction. This Plasmodium falciparum (isolate 3D7) protein is Lipoate--protein ligase 1.